We begin with the raw amino-acid sequence, 943 residues long: uncharacterized protein (943 aa).

The residue at position 1 (Met-1) is an N-acetylmethionine. 5 disordered regions span residues 37–63 (DETPISRNGNDSNINIQPSSVPQQQQQ), 152–177 (KHQFGKSKKNTKGTGGGGDGDDDDEV), 315–381 (LPMN…QQLQ), 397–472 (QNVP…PLKK), and 515–546 (EREALVEEKEKERAEKNTEANEEEEISHESDD). A compositionally biased stretch (polar residues) spans 41-58 (ISRNGNDSNINIQPSSVP). The span at 152 to 162 (KHQFGKSKKNT) shows a compositional bias: basic residues. Residues 318 to 358 (NNYNNHPGQFQNTPPVMPSGQQPPQQPRTLSLTNGPRYSPQ) show a composition bias toward polar residues. Residues 367–381 (QQISQRQQQQQQQLQ) are compositionally biased toward low complexity. Polar residues predominate over residues 397–409 (QNVPQGFNPWSPN). Residues 417–433 (SMKQPISQSSISSKNNS) show a composition bias toward low complexity. A compositionally biased stretch (polar residues) spans 434–470 (AYSIPNVQNNSLTTFSPSSPTDATAMPNSTKQGSSPL). Over residues 515-533 (EREALVEEKEKERAEKNTE) the composition is skewed to basic and acidic residues. A phosphoserine mark is found at Ser-553, Ser-586, and Ser-619. The interval 616 to 639 (EFPSPGKYNSNSDNGEMNTTNEVD) is disordered. Residues 622 to 639 (KYNSNSDNGEMNTTNEVD) are compositionally biased toward polar residues. Phosphoserine is present on Ser-649. Residues 654 to 683 (IPERDPKRNVSDATIKRRESDGNGRRLSNV) are disordered. A compositionally biased stretch (basic and acidic residues) spans 655–677 (PERDPKRNVSDATIKRRESDGNG). Ser-681, Ser-766, and Ser-771 each carry phosphoserine.

This is an uncharacterized protein from Saccharomyces cerevisiae (strain ATCC 204508 / S288c) (Baker's yeast).